A 382-amino-acid polypeptide reads, in one-letter code: Dual-specificity RNA methyltransferase RlmN (382 aa).

Residue glutamate 95 is the Proton acceptor of the active site. Positions 101-348 (EDDRGTLCIS…TTVRKTRGDD (248 aa)) constitute a Radical SAM core domain. Cysteine 108 and cysteine 353 are joined by a disulfide. Positions 115, 119, and 122 each coordinate [4Fe-4S] cluster. S-adenosyl-L-methionine-binding positions include 179-180 (GE), serine 211, 233-235 (SLH), and asparagine 310. Residue cysteine 353 is the S-methylcysteine intermediate of the active site.

It belongs to the radical SAM superfamily. RlmN family. [4Fe-4S] cluster serves as cofactor.

It is found in the cytoplasm. It carries out the reaction adenosine(2503) in 23S rRNA + 2 reduced [2Fe-2S]-[ferredoxin] + 2 S-adenosyl-L-methionine = 2-methyladenosine(2503) in 23S rRNA + 5'-deoxyadenosine + L-methionine + 2 oxidized [2Fe-2S]-[ferredoxin] + S-adenosyl-L-homocysteine. It catalyses the reaction adenosine(37) in tRNA + 2 reduced [2Fe-2S]-[ferredoxin] + 2 S-adenosyl-L-methionine = 2-methyladenosine(37) in tRNA + 5'-deoxyadenosine + L-methionine + 2 oxidized [2Fe-2S]-[ferredoxin] + S-adenosyl-L-homocysteine. Specifically methylates position 2 of adenine 2503 in 23S rRNA and position 2 of adenine 37 in tRNAs. m2A2503 modification seems to play a crucial role in the proofreading step occurring at the peptidyl transferase center and thus would serve to optimize ribosomal fidelity. This is Dual-specificity RNA methyltransferase RlmN from Bordetella parapertussis (strain 12822 / ATCC BAA-587 / NCTC 13253).